Here is a 306-residue protein sequence, read N- to C-terminus: uncharacterized protein (306 aa).

Residue tyrosine 51 is the Proton donor of the active site. 197-207 (GPVAKGLLTEK) is a binding site for NADP(+).

The protein belongs to the aldo/keto reductase family. Aldo/keto reductase 2 subfamily.

This is an uncharacterized protein from Bacillus subtilis (strain 168).